Reading from the N-terminus, the 122-residue chain is Large ribosomal subunit protein uL14 (122 aa).

This sequence belongs to the universal ribosomal protein uL14 family. As to quaternary structure, part of the 50S ribosomal subunit. Forms a cluster with proteins L3 and L19. In the 70S ribosome, L14 and L19 interact and together make contacts with the 16S rRNA in bridges B5 and B8.

Functionally, binds to 23S rRNA. Forms part of two intersubunit bridges in the 70S ribosome. In Mycobacterium leprae (strain TN), this protein is Large ribosomal subunit protein uL14.